The sequence spans 142 residues: Large ribosomal subunit protein uL13 (142 aa).

Belongs to the universal ribosomal protein uL13 family. Part of the 50S ribosomal subunit.

Its function is as follows. This protein is one of the early assembly proteins of the 50S ribosomal subunit, although it is not seen to bind rRNA by itself. It is important during the early stages of 50S assembly. The protein is Large ribosomal subunit protein uL13 of Stenotrophomonas maltophilia (strain R551-3).